A 127-amino-acid polypeptide reads, in one-letter code: Fluoride-specific ion channel FluC (127 aa).

A run of 4 helical transmembrane segments spans residues 4–24 (LLLA…LLSM), 35–55 (LGTL…FAWF), 71–91 (TGFC…VFLL), and 103–123 (VFVN…LFSA). Na(+) contacts are provided by G75 and T78.

This sequence belongs to the fluoride channel Fluc/FEX (TC 1.A.43) family.

It localises to the cell inner membrane. It catalyses the reaction fluoride(in) = fluoride(out). Na(+) is not transported, but it plays an essential structural role and its presence is essential for fluoride channel function. Functionally, fluoride-specific ion channel. Important for reducing fluoride concentration in the cell, thus reducing its toxicity. The sequence is that of Fluoride-specific ion channel FluC from Escherichia coli O8 (strain IAI1).